Reading from the N-terminus, the 182-residue chain is uncharacterized protein (182 aa).

Positions 1–26 are cleaved as a signal peptide; the sequence is MIRALCTIVLIAAGVAVALYLSLVYG. Residues 68–90 form a disordered region; that stretch reads YTERPYPVSSTQSPTTTQSPTTT. A compositionally biased stretch (low complexity) spans 74 to 90; that stretch reads PVSSTQSPTTTQSPTTT.

This is an uncharacterized protein from Dryophytes versicolor (chameleon treefrog).